A 1881-amino-acid chain; its full sequence is Endoribonuclease Dicer-S (1881 aa).

A Helicase ATP-binding domain is found at 41 to 217; the sequence is LLEAALDHNI…DLEEKIQNLE (177 aa). Residue 54 to 61 participates in ATP binding; it reads LNSGSGKT. The DECH box signature appears at 165–168; it reads DECH. A Helicase C-terminal domain is found at 425–594; the sequence is SFPSPFTNIL…SMDCGNTESE (170 aa). The region spanning 622–714 is the Dicer dsRNA-binding fold domain; that stretch reads AIGHINRYCA…MPVGKETVKY (93 aa). Residues 887 to 1034 form the PAZ domain; sequence KFVEDIEKSE…LVPELCAIHP (148 aa). RNase III domains are found at residues 1249–1380 and 1625–1783; these read TSDI…ETSG and FENF…MDSG. Mg(2+) is bound by residues Glu1293, Asp1371, Glu1374, Glu1664, Asp1769, and Glu1772. Residues 1808 to 1873 form the DRBM domain; that stretch reads VPRSPVRELL…ARRALRSLKA (66 aa).

The protein belongs to the helicase family. Dicer subfamily. Component of the RISC loading complex (RLC), or micro-RNA (miRNA) loading complex (miRLC), which is composed of dicer1, ago2 and tarbp2; dicer1 and tarbp2 are required to process precursor miRNAs (pre-miRNAs) to mature miRNAs and then load them onto ago2. Note that the trimeric RLC/miRLC is also referred to as RISC. It depends on Mg(2+) as a cofactor. Mn(2+) serves as cofactor.

It localises to the cytoplasm. It catalyses the reaction Endonucleolytic cleavage to 5'-phosphomonoester.. In terms of biological role, double-stranded RNA (dsRNA) endoribonuclease playing a central role in short dsRNA-mediated post-transcriptional gene silencing. Cleaves naturally occurring long dsRNAs and short hairpin pre-microRNAs (miRNA) into fragments of twenty-one to twenty-three nucleotides with 3' overhang of two nucleotides, producing respectively short interfering RNAs (siRNA) and mature microRNAs. SiRNAs and miRNAs serve as guide to direct the RNA-induced silencing complex (RISC) to complementary RNAs to degrade them or prevent their translation. Gene silencing mediated by siRNAs, also called RNA interference, controls the elimination of transcripts from mobile and repetitive DNA elements of the genome but also the degradation of exogenous RNA of viral origin for instance. The miRNA pathway on the other side is a mean to specifically regulate the expression of target genes. During embryonic development, at the left-right organizer, post-transcriptionally regulates the expression of dand5 in flow sensor cells. In post-flow stages, acts along with Bicc1 to repress dand5 mRNA translation and decay. Decreased Dand5 expression lifts repression of Nodal and defines leftness by induction of the lateral plate mesoderm Nodal signaling cascade. The sequence is that of Endoribonuclease Dicer-S (dicer1.S) from Xenopus laevis (African clawed frog).